The chain runs to 321 residues: MKEIVYYDFDLDLNPEIRWVKIFDAFKDKITELKSHLVNLLKPHDSSLKVISMLSGFINPENILHYGEIKYITSKLGMKMYEIIILQLVYEITAACTSAVIDVGDNKLFLRTLDWPLEFLKDFTIGLNIIRANKKIGQTITWIGYVGFLTAWNHKHNYTIAINYRNSNESNQSRLAKIIKNIQRTITLKWPVGYMVRYLIENEKPIEKVIAFTTEVQLISPCYITVYISDGQSFVVTRDCHKTVDIRTDNLIQTNCDFGKNKPNILYSVERRDYVESVIASITTDISPDKLIKTLLKFPVVNEDTIFWVCQFEGKTYSNIV.

This is an uncharacterized protein from Acanthamoeba polyphaga (Amoeba).